The chain runs to 554 residues: 2-succinyl-5-enolpyruvyl-6-hydroxy-3-cyclohexene-1-carboxylate synthase (554 aa).

Belongs to the TPP enzyme family. MenD subfamily. Homodimer. It depends on Mg(2+) as a cofactor. Mn(2+) is required as a cofactor. The cofactor is thiamine diphosphate.

It catalyses the reaction isochorismate + 2-oxoglutarate + H(+) = 5-enolpyruvoyl-6-hydroxy-2-succinyl-cyclohex-3-ene-1-carboxylate + CO2. The protein operates within quinol/quinone metabolism; 1,4-dihydroxy-2-naphthoate biosynthesis; 1,4-dihydroxy-2-naphthoate from chorismate: step 2/7. Its pathway is quinol/quinone metabolism; menaquinone biosynthesis. Functionally, catalyzes the thiamine diphosphate-dependent decarboxylation of 2-oxoglutarate and the subsequent addition of the resulting succinic semialdehyde-thiamine pyrophosphate anion to isochorismate to yield 2-succinyl-5-enolpyruvyl-6-hydroxy-3-cyclohexene-1-carboxylate (SEPHCHC). The chain is 2-succinyl-5-enolpyruvyl-6-hydroxy-3-cyclohexene-1-carboxylate synthase from Lactococcus lactis subsp. cremoris (strain SK11).